We begin with the raw amino-acid sequence, 193 residues long: Rho-related protein racF1 (193 aa).

GTP is bound at residue 10 to 17 (GDGAVGKT). The short motif at 32–40 (YIPTVFDNY) is the Effector region element. Residues 57 to 61 (DTAGQ) and 115 to 118 (TKQD) each bind GTP. C190 is subject to Cysteine methyl ester. C190 carries S-geranylgeranyl cysteine lipidation. The propeptide at 191–193 (TIM) is removed in mature form.

The protein belongs to the small GTPase superfamily. Rho family. Interacts with pakB.

The protein resides in the membrane. Its function is as follows. Might act in concert and/or share functions with other members of the RHO family in the regulation of a subset of cytoskeletal rearrangements that are required for these processes. The polypeptide is Rho-related protein racF1 (racF1) (Dictyostelium discoideum (Social amoeba)).